Consider the following 205-residue polypeptide: Small ribosomal subunit protein uS4 (205 aa).

The segment at 18–46 (NIWGRPKSPVNSRAYGPGQHGQRRKSKVS) is disordered. Positions 94-155 (SRLDAVVYRA…RSRNMALVLE (62 aa)) constitute an S4 RNA-binding domain.

It belongs to the universal ribosomal protein uS4 family. Part of the 30S ribosomal subunit. Contacts protein S5. The interaction surface between S4 and S5 is involved in control of translational fidelity.

One of the primary rRNA binding proteins, it binds directly to 16S rRNA where it nucleates assembly of the body of the 30S subunit. Functionally, with S5 and S12 plays an important role in translational accuracy. The sequence is that of Small ribosomal subunit protein uS4 from Phenylobacterium zucineum (strain HLK1).